Here is a 480-residue protein sequence, read N- to C-terminus: MGIKGLTKFIADTAPNAIKEIKIENLMGRVVAIDASMSLYQFIIAIRDGDQYGNLMNESGETTSHISGLMSRTIKLMENGLKPIYVFDGAPPELKGSELEKRGEKRQKAEELLIKAKAEGNLEEIKKQSGRTVRVTKKQNEEAKKLLTLMGIPVIESPCEAEAQCAFLTKYEMAHATATEDADALVFGTKILIRNLNANASSNKNKNKNSSKRGYILTEINLEQVLKGLKLTMDEFIDFCILCGCDYCDTIKGIGSKTAYNLIKEYNCIENIIKNIDQNKYQVPANFKYVEARQSFINPKVLEKSEVKIDWCEPKIEELKTFLIKEHNFNEVRVTNYITRLLKARKVTTQRRLDTFFTTCTKKSTKLIIEESQKEVLKTKGKGKKREINNDSSTKLNAKKKKTNVKDEKKNNEKVDELKNKSDENLVKDEEDDQDDYDQNIFDEKTNSESGNIKNENVKEDVSSNDITMDIPKCTNDIVC.

Residues 1-106 (MGIKGLTKFI…SELEKRGEKR (106 aa)) form an N-domain region. Residue D34 participates in Mg(2+) binding. Residues R47 and R72 each contribute to the DNA site. Residues D88, E160, E162, D181, and D183 each coordinate Mg(2+). Residues 124-266 (EIKKQSGRTV…KTAYNLIKEY (143 aa)) form an I-domain region. E160 serves as a coordination point for DNA. Residues G244 and D246 each contribute to the DNA site. Mg(2+) is bound at residue D246. The interval 349 to 357 (TQRRLDTFF) is interaction with PCNA. The segment at 379–461 (TKGKGKKREI…NIKNENVKED (83 aa)) is disordered. The span at 404–428 (NVKDEKKNNEKVDELKNKSDENLVK) shows a compositional bias: basic and acidic residues. Residues 429–438 (DEEDDQDDYD) show a composition bias toward acidic residues.

The protein belongs to the XPG/RAD2 endonuclease family. FEN1 subfamily. Interacts with PCNA. Three molecules of FEN1 bind to one PCNA trimer with each molecule binding to one PCNA monomer. PCNA stimulates the nuclease activity without altering cleavage specificity. It depends on Mg(2+) as a cofactor. Post-translationally, phosphorylated. Phosphorylation upon DNA damage induces relocalization to the nuclear plasma.

It localises to the nucleus. It is found in the nucleolus. Its subcellular location is the nucleoplasm. The protein localises to the mitochondrion. Its activity is regulated as follows. Inhibited by monovalent metal ions. Structure-specific nuclease with 5'-flap endonuclease and 5'-3' exonuclease activities involved in DNA replication and repair. During DNA replication, cleaves the 5'-overhanging flap structure that is generated by displacement synthesis when DNA polymerase encounters the 5'-end of a downstream Okazaki fragment. It enters the flap from the 5'-end and then tracks to cleave the flap base, leaving a nick for ligation. Also involved in the long patch base excision repair (LP-BER) pathway, by cleaving within the apurinic/apyrimidinic (AP) site-terminated flap. Acts as a genome stabilization factor that prevents flaps from equilibrating into structures that lead to duplications and deletions. Also possesses 5'-3' exonuclease activity on nicked or gapped double-stranded DNA, and exhibits RNase H activity. Also involved in replication and repair of rDNA and in repairing mitochondrial DNA. The polypeptide is Flap endonuclease 1 (Plasmodium yoelii yoelii).